We begin with the raw amino-acid sequence, 86 residues long: Omega-theraphotoxin-Hhn1f 2 (86 aa).

Positions 1–21 are cleaved as a signal peptide; sequence MKSIVFVALFGLALLAVVCSA. The propeptide occupies 22-50; sequence SEDAHKELLKEVVRAVVVDKTDAVQAEER. 3 disulfide bridges follow: C52-C66, C59-C71, and C65-C78.

Belongs to the neurotoxin 10 (Hwtx-1) family. 17 (Hntx-9) subfamily. As to expression, expressed by the venom gland.

Its subcellular location is the secreted. Its function is as follows. Ion channel inhibitor. The protein is Omega-theraphotoxin-Hhn1f 2 of Cyriopagopus hainanus (Chinese bird spider).